A 95-amino-acid polypeptide reads, in one-letter code: Co-chaperonin GroES (95 aa).

Belongs to the GroES chaperonin family. Heptamer of 7 subunits arranged in a ring. Interacts with the chaperonin GroEL.

Its subcellular location is the cytoplasm. Together with the chaperonin GroEL, plays an essential role in assisting protein folding. The GroEL-GroES system forms a nano-cage that allows encapsulation of the non-native substrate proteins and provides a physical environment optimized to promote and accelerate protein folding. GroES binds to the apical surface of the GroEL ring, thereby capping the opening of the GroEL channel. The chain is Co-chaperonin GroES from Beijerinckia indica subsp. indica (strain ATCC 9039 / DSM 1715 / NCIMB 8712).